Consider the following 257-residue polypeptide: Hydroxyethylthiazole kinase (257 aa).

Methionine 49 lines the substrate pocket. The ATP site is built by arginine 124 and threonine 170. Glycine 197 contacts substrate.

It belongs to the Thz kinase family. Requires Mg(2+) as cofactor.

It catalyses the reaction 5-(2-hydroxyethyl)-4-methylthiazole + ATP = 4-methyl-5-(2-phosphooxyethyl)-thiazole + ADP + H(+). Its pathway is cofactor biosynthesis; thiamine diphosphate biosynthesis; 4-methyl-5-(2-phosphoethyl)-thiazole from 5-(2-hydroxyethyl)-4-methylthiazole: step 1/1. Catalyzes the phosphorylation of the hydroxyl group of 4-methyl-5-beta-hydroxyethylthiazole (THZ). The polypeptide is Hydroxyethylthiazole kinase (Klebsiella pneumoniae subsp. pneumoniae (strain ATCC 700721 / MGH 78578)).